The following is a 361-amino-acid chain: D-alanine--D-alanine ligase (361 aa).

The ATP-grasp domain occupies lysine 134 to aspartate 344. Lysine 167 to glutamate 222 contributes to the ATP binding site. Aspartate 297, glutamate 311, and asparagine 313 together coordinate Mg(2+).

Belongs to the D-alanine--D-alanine ligase family. The cofactor is Mg(2+). It depends on Mn(2+) as a cofactor.

It is found in the cytoplasm. The enzyme catalyses 2 D-alanine + ATP = D-alanyl-D-alanine + ADP + phosphate + H(+). The protein operates within cell wall biogenesis; peptidoglycan biosynthesis. Cell wall formation. The chain is D-alanine--D-alanine ligase from Borreliella burgdorferi (strain ATCC 35210 / DSM 4680 / CIP 102532 / B31) (Borrelia burgdorferi).